Reading from the N-terminus, the 63-residue chain is Large ribosomal subunit protein uL30 (63 aa).

It belongs to the universal ribosomal protein uL30 family. In terms of assembly, part of the 50S ribosomal subunit.

The protein is Large ribosomal subunit protein uL30 of Stenotrophomonas maltophilia (strain K279a).